The following is a 252-amino-acid chain: Imidazole glycerol phosphate synthase subunit HisF (252 aa).

Residues D11 and D130 contribute to the active site.

Belongs to the HisA/HisF family. Heterodimer of HisH and HisF.

The protein resides in the cytoplasm. It carries out the reaction 5-[(5-phospho-1-deoxy-D-ribulos-1-ylimino)methylamino]-1-(5-phospho-beta-D-ribosyl)imidazole-4-carboxamide + L-glutamine = D-erythro-1-(imidazol-4-yl)glycerol 3-phosphate + 5-amino-1-(5-phospho-beta-D-ribosyl)imidazole-4-carboxamide + L-glutamate + H(+). It participates in amino-acid biosynthesis; L-histidine biosynthesis; L-histidine from 5-phospho-alpha-D-ribose 1-diphosphate: step 5/9. IGPS catalyzes the conversion of PRFAR and glutamine to IGP, AICAR and glutamate. The HisF subunit catalyzes the cyclization activity that produces IGP and AICAR from PRFAR using the ammonia provided by the HisH subunit. In Desulforamulus reducens (strain ATCC BAA-1160 / DSM 100696 / MI-1) (Desulfotomaculum reducens), this protein is Imidazole glycerol phosphate synthase subunit HisF.